We begin with the raw amino-acid sequence, 104 residues long: Flagellar hook-basal body complex protein FliE (104 aa).

This sequence belongs to the FliE family.

It localises to the bacterial flagellum basal body. This chain is Flagellar hook-basal body complex protein FliE, found in Salmonella heidelberg (strain SL476).